The chain runs to 385 residues: Isocitrate dehydrogenase [NAD] subunit beta, mitochondrial (385 aa).

The transit peptide at 1–34 directs the protein to the mitochondrion; it reads MAALSGVRWLTRALVSAGNPGAWRGLSTSAAAHA. Position 199 is an N6-acetyllysine (Lys199).

It belongs to the isocitrate and isopropylmalate dehydrogenases family. As to quaternary structure, heterooligomer of subunits alpha (IDH3A), beta (IDH3B), and gamma (IDH3G) in the apparent ratio of 2:1:1. The heterodimer containing one IDH3A and one IDH3B subunit and the heterodimer containing one IDH3A and one IDH3G subunit assemble into a heterotetramer (which contains two subunits of IDH3A, one of IDH3B and one of IDH3G) and further into the heterooctamer.

Its subcellular location is the mitochondrion. Its activity is regulated as follows. The heterotetramer and the heterodimer composed of IDH3A and IDH3G subunits can be allosterically activated by citrate (CIT) or/and ADP, and the two activators can act independently or synergistically. The heterodimer composed of IDH3A and IDH3B subunits cannot be allosterically regulated and the allosteric regulation of the heterotetramer is through the IDH3G subunit and not the IDH3B subunit. The IDH3G subunit contains the allosteric site which consists of a CIT-binding site and an ADP-binding site, and the binding of CIT and ADP causes conformational changes at the allosteric site which are transmitted to the active site in the catalytic subunit (IDH3A) through a cascade of conformational changes at the heterodimer interface, leading to stabilization of the isocitrate-binding at the active site and thus activation of the enzyme. ATP can activate the heterotetramer and the heterodimer composed of IDH3A and IDH3G subunits at low concentrations but inhibits their activities at high concentrations, whereas ATP exhibits only inhibitory effect on the heterodimer composed of IDH3A and IDH3B subunits. Functionally, plays a structural role to facilitate the assembly and ensure the full activity of the enzyme catalyzing the decarboxylation of isocitrate (ICT) into alpha-ketoglutarate. The heterodimer composed of the alpha (IDH3A) and beta (IDH3B) subunits and the heterodimer composed of the alpha (IDH3A) and gamma (IDH3G) subunits, have considerable basal activity but the full activity of the heterotetramer (containing two subunits of IDH3A, one of IDH3B and one of IDH3G) requires the assembly and cooperative function of both heterodimers. This chain is Isocitrate dehydrogenase [NAD] subunit beta, mitochondrial (IDH3B), found in Macaca fascicularis (Crab-eating macaque).